The primary structure comprises 147 residues: Protein MGF 100-3L (147 aa).

The protein belongs to the asfivirus MGF 100 family.

Functionally, plays a role in virus cell tropism, and may be required for efficient virus replication in macrophages. The polypeptide is Protein MGF 100-3L (African swine fever virus (isolate Tick/Malawi/Lil 20-1/1983) (ASFV)).